An 87-amino-acid chain; its full sequence is Sec-independent protein translocase protein TatA (87 aa).

The helical transmembrane segment at 1–21 (MGGISIWQLLIIALIIVLLFG) threads the bilayer. A disordered region spans residues 54 to 87 (NTEADADFEQKTLSKEEQQSEDPVQKSQKDKEQV).

This sequence belongs to the TatA/E family. The Tat system comprises two distinct complexes: a TatABC complex, containing multiple copies of TatA, TatB and TatC subunits, and a separate TatA complex, containing only TatA subunits. Substrates initially bind to the TatABC complex, which probably triggers association of the separate TatA complex to form the active translocon.

It is found in the cell inner membrane. Part of the twin-arginine translocation (Tat) system that transports large folded proteins containing a characteristic twin-arginine motif in their signal peptide across membranes. TatA could form the protein-conducting channel of the Tat system. The chain is Sec-independent protein translocase protein TatA from Photobacterium profundum (strain SS9).